A 2031-amino-acid polypeptide reads, in one-letter code: Pericentriolar material 1 protein (2031 aa).

Disordered regions lie at residues 1-82 and 111-165; these read MATG…HTFP and DQRS…STRS. Residues 1-484 are self-association; it reads MATGGGPPDE…RSTEQRTLGS (484 aa). Over residues 42–58 the composition is skewed to basic and acidic residues; that stretch reads RSAEKNKKKFVECDLRL. Residues 114-130 show a composition bias toward polar residues; sequence SIGSDSQGRATAANNKR. Over residues 149 to 162 the composition is skewed to basic and acidic residues; sequence NKEKSKSPPKREAS. Positions 302–394 form a coiled coil; that stretch reads RQEAKEELKN…FHNQLHDSED (93 aa). A compositionally biased stretch (polar residues) spans 469–494; sequence SSVSPRRSTEQRTLGSAVSSALTSDN. The disordered stretch occupies residues 469–495; that stretch reads SSVSPRRSTEQRTLGSAVSSALTSDNR. The stretch at 523 to 549 forms a coiled coil; it reads AEKLKKLKEVRKRLNELRELVHYYEQT. Disordered regions lie at residues 550–590 and 649–678; these read SDMM…NPQY and KEED…NSVA. Over residues 562 to 580 the composition is skewed to acidic residues; the sequence is KDEDETEDSEYDSEQEDAE. Polar residues-rich tracts occupy residues 581-590 and 667-677; these read PTTNIRNPQY and SRASLSSQNSV. The stretch at 684-711 forms a coiled coil; it reads VDFEQKFNRLVAAKQKLKQLQDLVAMYG. Residues 712–752 are disordered; sequence DDSESEPVAPERSFSGDQFPPEATTLKQQPNNTRPNVSKAQ. Residues 736-750 are compositionally biased toward polar residues; it reads TLKQQPNNTRPNVSK. The self-association and localization to centrosomes stretch occupies residues 745-1271; it reads RPNVSKAQKD…PACFGAGLSA (527 aa). Positions 757–805 form a coiled coil; sequence LKEQAREKFYESKLQQQQRELSQLQEERKKLIEIQEKIQTLRKACPDLQ. Polar residues-rich tracts occupy residues 806–823 and 888–898; these read LSTS…NRQM and QGNTETTSAAS. Disordered regions lie at residues 806-835 and 882-1014; these read LSTS…VNTN and AEHQ…VSMR. A coiled-coil region spans residues 858–892; sequence SEIRKHQILREDLRQRRKQLETLMAEHQRRQGNTE. The span at 930–945 shows a compositional bias: acidic residues; the sequence is LEEEEEEEEVDDEECL. Polar residues-rich tracts occupy residues 960–981 and 1004–1013; these read NTSC…FNGR and KTRQQQNVSM. Residues 1025-1049 adopt a coiled-coil conformation; the sequence is LSHVEEKEHWQEQIDQIKKQLDYST. Disordered regions lie at residues 1123-1146, 1219-1247, 1318-1345, and 1514-1533; these read QHLQ…TSPN, KPFE…QGRR, SAQA…QKSK, and PVCQ…LSTS. Basic and acidic residues-rich tracts occupy residues 1127–1136 and 1221–1247; these read GESHQREDRG and FESH…QGRR. Residues 1331–1345 are compositionally biased toward basic residues; it reads KAKNKKRKVFHQKSK. Positions 1524-1533 are enriched in polar residues; it reads GDNISSLSTS. The stretch at 1550–1599 forms a coiled coil; that stretch reads HFDQALARMREYERMKSETENGLVADCCNNLNAAASSLEGTNDEARGRAQ. Disordered regions lie at residues 1746 to 1802, 1817 to 1870, 1922 to 1965, and 2007 to 2031; these read ADKE…DLDE, ALTN…EANI, NNVK…DEDD, and ENGA…IHPA. Residues 1771-1784 are compositionally biased toward basic and acidic residues; it reads KDETETAEENRNFD. The segment covering 1824-1835 has biased composition (acidic residues); the sequence is GEDENEDEENYE. 2 stretches are compositionally biased toward polar residues: residues 1843 to 1852 and 1922 to 1942; these read VQTSLETSSE and NNVK…SDTE.

This sequence belongs to the PCM1 family. Self-associates. Interacts with cetn3.

It is found in the cytoplasm. The protein localises to the cytoskeleton. It localises to the microtubule organizing center. The protein resides in the centrosome. Its subcellular location is the cytoplasmic granule. It is found in the centriolar satellite. The protein localises to the cilium basal body. Required to anchor microtubules to the centrosome. Required for centrosome assembly and function. Essential for the correct localization of several centrosomal proteins including cetn3 and pcnt. Probably involved in the biogenesis of cilia. The chain is Pericentriolar material 1 protein (pcm1) from Xenopus laevis (African clawed frog).